A 485-amino-acid polypeptide reads, in one-letter code: NADH-quinone oxidoreductase subunit N (485 aa).

The next 14 membrane-spanning stretches (helical) occupy residues 8-28, 35-55, 71-91, 105-125, 127-147, 159-179, 203-223, 235-255, 271-291, 297-317, 326-346, 373-393, 408-430, and 455-475; these read LIALLPLLIVGLTVVVVMLSI, FLNATLSVIGLNAALVSLWFV, GFAMLYTGLVLLASLATCTFA, FYLLVLIASLGGILLANANHL, ALFLGIELISLPLFGLIGYAF, YTILSAAASSFLLFGMALVYA, LLAGFGLMIVGLGFKLSLAPF, PAPVSTFLATASKIAIFGVVM, VVLGIIAFASIIFGNLMALSQ, LLGYSSISHLGYLLVALIALQ, VGVYLAGYLFSSLGAFGVVSL, AAVMTVMMLSLAGIPMTLGFI, WWLVAAVVVGSAIGLYYYLRVAV, and IVVLISALLVLVLGVWPQPLI.

This sequence belongs to the complex I subunit 2 family. In terms of assembly, NDH-1 is composed of 13 different subunits. Subunits NuoA, H, J, K, L, M, N constitute the membrane sector of the complex.

It is found in the cell inner membrane. It catalyses the reaction a quinone + NADH + 5 H(+)(in) = a quinol + NAD(+) + 4 H(+)(out). NDH-1 shuttles electrons from NADH, via FMN and iron-sulfur (Fe-S) centers, to quinones in the respiratory chain. The immediate electron acceptor for the enzyme in this species is believed to be ubiquinone. Couples the redox reaction to proton translocation (for every two electrons transferred, four hydrogen ions are translocated across the cytoplasmic membrane), and thus conserves the redox energy in a proton gradient. The polypeptide is NADH-quinone oxidoreductase subunit N (Salmonella paratyphi C (strain RKS4594)).